The following is a 403-amino-acid chain: Chalcone synthase 3 (403 aa).

Cys-170 is an active-site residue.

Belongs to the thiolase-like superfamily. Chalcone/stilbene synthases family.

The enzyme catalyses (E)-4-coumaroyl-CoA + 3 malonyl-CoA + 3 H(+) = 2',4,4',6'-tetrahydroxychalcone + 3 CO2 + 4 CoA. Its pathway is secondary metabolite biosynthesis; flavonoid biosynthesis. Its function is as follows. The primary product of this enzyme is 4,2',4',6'-tetrahydroxychalcone (also termed naringenin-chalcone or chalcone) which can under specific conditions spontaneously isomerize into naringenin. In Gerbera hybrida (Daisy), this protein is Chalcone synthase 3 (CHS3).